The sequence spans 253 residues: MARLSFVSLLSLSLLFGQQAVRAQDYPTAVTLDCKEAMNKLRKAAGLPAFEDAVGDTFVLPAYSHEESRAAPVAETLWKTEICPKVLGGGRSRNVTEAVKLTGNFAYYPVTDGKKECSDAVEYWKGGLSQFNDTIPPTFQALNDPVVYNDRAVSFVALYNPKTSPVVSCVLLQCPNAGVGGRRLAAGTTDAVICLTNPAPLEARSQPFDDEQWKKIVDSLSLSEEEEEKGGVSPVVPSVALISAAVISAFALF.

The first 23 residues, 1-23 (MARLSFVSLLSLSLLFGQQAVRA), serve as a signal peptide directing secretion. Positions 182-184 (RRL) are cleaved as a propeptide — removed in mature form.

As to quaternary structure, the TA4 antigen is composed of a 17 kDa and a 8 kDa chain, linked by a disulfide bond.

This chain is Sporulated oocyst TA4 antigen, found in Eimeria tenella (Coccidian parasite).